The primary structure comprises 491 residues: Cadherin-3 (491 aa).

Cadherin domains are found at residues 1–102, 103–208, and 209–314; these read ENTV…PPVF, VPPS…DHGP, and VPEP…DPWT. At 1–316 the chain is on the extracellular side; it reads ENTVSHEVQR…VTCRDPWTWG (316 aa). N-linked (GlcNAc...) asparagine glycosylation occurs at Asn228. Residues 317–339 traverse the membrane as a helical segment; it reads FLLPILGAALALLLLLLVLLFLV. Residues 340-491 are Cytoplasmic-facing; the sequence is RKKRKIKEPL…ADMYGGGQDD (152 aa).

As to quaternary structure, interacts with CDCP1 and CTNNB1.

The protein resides in the cell membrane. Functionally, cadherins are calcium-dependent cell adhesion proteins. They preferentially interact with themselves in a homophilic manner in connecting cells; cadherins may thus contribute to the sorting of heterogeneous cell types. The sequence is that of Cadherin-3 (CDH3) from Bos taurus (Bovine).